Here is a 239-residue protein sequence, read N- to C-terminus: Uracil-DNA glycosylase (239 aa).

Aspartate 65 acts as the Proton acceptor in catalysis.

It belongs to the uracil-DNA glycosylase (UDG) superfamily. UNG family.

Its subcellular location is the cytoplasm. It catalyses the reaction Hydrolyzes single-stranded DNA or mismatched double-stranded DNA and polynucleotides, releasing free uracil.. Excises uracil residues from the DNA which can arise as a result of misincorporation of dUMP residues by DNA polymerase or due to deamination of cytosine. The protein is Uracil-DNA glycosylase of Levilactobacillus brevis (strain ATCC 367 / BCRC 12310 / CIP 105137 / JCM 1170 / LMG 11437 / NCIMB 947 / NCTC 947) (Lactobacillus brevis).